Reading from the N-terminus, the 344-residue chain is GTP 3',8-cyclase (344 aa).

A Radical SAM core domain is found at proline 19–alanine 245. Arginine 28 contacts GTP. [4Fe-4S] cluster is bound by residues cysteine 35 and cysteine 39. Position 41 (tyrosine 41) interacts with S-adenosyl-L-methionine. Residue cysteine 42 participates in [4Fe-4S] cluster binding. Residue arginine 77 participates in GTP binding. Glycine 81 is an S-adenosyl-L-methionine binding site. Threonine 111 is a GTP binding site. Residue serine 135 coordinates S-adenosyl-L-methionine. Residue lysine 171 participates in GTP binding. Position 205 (methionine 205) interacts with S-adenosyl-L-methionine. [4Fe-4S] cluster contacts are provided by cysteine 268 and cysteine 271. Arginine 273–arginine 275 contributes to the GTP binding site. Residue cysteine 285 coordinates [4Fe-4S] cluster.

The protein belongs to the radical SAM superfamily. MoaA family. Monomer and homodimer. [4Fe-4S] cluster is required as a cofactor.

It carries out the reaction GTP + AH2 + S-adenosyl-L-methionine = (8S)-3',8-cyclo-7,8-dihydroguanosine 5'-triphosphate + 5'-deoxyadenosine + L-methionine + A + H(+). Its pathway is cofactor biosynthesis; molybdopterin biosynthesis. Its function is as follows. Catalyzes the cyclization of GTP to (8S)-3',8-cyclo-7,8-dihydroguanosine 5'-triphosphate. This chain is GTP 3',8-cyclase, found in Brucella melitensis biotype 2 (strain ATCC 23457).